The primary structure comprises 226 residues: MRVSSASSTPPPPAFAAAAWAVVLLAMLRSDVALAAAASSNDDTGLSPLMPPPPLAAPVPAAVSPAPATPPAVLSPRKLLRPQGADVVGVGFVSGSGGGGGGDGVRTRRVDDGCAGADDIAIYQGRATPLPSGVPAYTVDVMNRCAGGGGGDEECAIAGIHVRCGWFSSVSLVDPRVFRRLGHDDCLLNDGRPLLAGETVSFEYTNSFPYKLSVSVATCVVDPAAP.

The N-terminal stretch at 1–35 (MRVSSASSTPPPPAFAAAAWAVVLLAMLRSDVALA) is a signal peptide.

As to quaternary structure, interacts with MSP1. In terms of tissue distribution, expressed in roots, and anthers and ovules during meiosis.

Involved in cell specification during anther development. Required for the differentiation of primary parietal cells into secondary parietal cells in anthers. May serve as an extracellular ligand for the MSP1 receptor kinase to limit sporocyte number in ovules. This is TPD1 protein homolog 1A from Oryza sativa subsp. japonica (Rice).